The chain runs to 294 residues: Nucleotide-binding protein CLB_3433 (294 aa).

Gly-8 to Thr-15 provides a ligand contact to ATP. Asp-59–Gly-62 is a GTP binding site.

The protein belongs to the RapZ-like family.

Displays ATPase and GTPase activities. In Clostridium botulinum (strain ATCC 19397 / Type A), this protein is Nucleotide-binding protein CLB_3433.